Reading from the N-terminus, the 572-residue chain is Probable terpene synthase 13 (572 aa).

Positions 326, 330, and 478 each coordinate Mg(2+). The DDXXD motif motif lies at aspartate 326–aspartate 330.

Belongs to the terpene synthase family. Mg(2+) serves as cofactor.

Probable sesquiterpene synthase. This chain is Probable terpene synthase 13 (TPS13), found in Ricinus communis (Castor bean).